A 213-amino-acid chain; its full sequence is Adenylate kinase (213 aa).

10-15 (GSGKGT) contacts ATP. An NMP region spans residues 30–59 (SVGDLLRNIISSESKLGKGIKDTVESGNLI). Residues R36, 57–59 (NLI), 83–86 (GFPR), and Q90 each bind AMP. The LID stretch occupies residues 125-160 (DRLTCLDCKSIYSISSFKNTTCAKCKSTRLEKRIDD). R126 contributes to the ATP binding site. C129 and C132 together coordinate Zn(2+). Position 135–136 (135–136 (IY)) interacts with ATP. Residues C146 and C149 each contribute to the Zn(2+) site. Residues R157 and R169 each contribute to the AMP site. An ATP-binding site is contributed by L195.

It belongs to the adenylate kinase family. In terms of assembly, monomer.

Its subcellular location is the cytoplasm. The catalysed reaction is AMP + ATP = 2 ADP. The protein operates within purine metabolism; AMP biosynthesis via salvage pathway; AMP from ADP: step 1/1. Its function is as follows. Catalyzes the reversible transfer of the terminal phosphate group between ATP and AMP. Plays an important role in cellular energy homeostasis and in adenine nucleotide metabolism. This is Adenylate kinase from Wolbachia pipientis subsp. Culex pipiens (strain wPip).